The primary structure comprises 418 residues: Gamma-glutamyl phosphate reductase (418 aa).

It belongs to the gamma-glutamyl phosphate reductase family.

It localises to the cytoplasm. The enzyme catalyses L-glutamate 5-semialdehyde + phosphate + NADP(+) = L-glutamyl 5-phosphate + NADPH + H(+). It participates in amino-acid biosynthesis; L-proline biosynthesis; L-glutamate 5-semialdehyde from L-glutamate: step 2/2. In terms of biological role, catalyzes the NADPH-dependent reduction of L-glutamate 5-phosphate into L-glutamate 5-semialdehyde and phosphate. The product spontaneously undergoes cyclization to form 1-pyrroline-5-carboxylate. In Histophilus somni (strain 2336) (Haemophilus somnus), this protein is Gamma-glutamyl phosphate reductase.